The sequence spans 1146 residues: Large proline-rich protein BAG6 (1146 aa).

Methionine 1 bears the N-acetylmethionine mark. In terms of domain architecture, Ubiquitin-like spans 17 to 92 (LEVLVKTLDS…HLVERAPPQT (76 aa)). 5 disordered regions span residues 87–128 (RAPP…HDRN), 186–268 (RGGT…HPSP), 381–436 (TMTG…TSHP), 457–525 (QDSG…QGAG), and 555–618 (PGMA…SAAD). Serine 96 carries the post-translational modification Phosphoserine. Residues 96-108 (SGASSGTGSASAT) show a composition bias toward low complexity. A compositionally biased stretch (gly residues) spans 109–122 (HGGGPLPGTRGPGA). A Phosphothreonine modification is found at threonine 117. Over residues 208 to 217 (VALNSQTSEP) the composition is skewed to polar residues. 2 repeat units span residues 236–265 (RPPT…APNH) and 410–438 (PSSA…HPRV). Positions 236–650 (RPPTQTPELP…LASPTITVAV (415 aa)) are 4 X 29 AA approximate repeats. Positions 239-257 (TQTPELPPSGPAPAGPAPA) are enriched in pro residues. A compositionally biased stretch (low complexity) spans 394-413 (GAEAASPGSGQASSLPPSSA). Pro residues-rich tracts occupy residues 422–433 (APPPGPAPPPAT) and 502–515 (PTPP…PGGP). Low complexity-rich tracts occupy residues 555 to 573 (PGMA…AQAP) and 583 to 601 (PATA…TAGP). 2 consecutive repeat copies span residues 589–616 (SAGT…QPSA) and 622–650 (SQLL…TVAV). Residues 603–614 (PGGPAQPPPPQP) are compositionally biased toward pro residues. 2 disordered regions span residues 666–711 (ASQA…ESLP) and 961–1146 (PQAL…ADDP). The segment covering 670–694 (APPPPPPPPPPPPAPEQQTTPPPGS) has biased composition (pro residues). Over residues 977–986 (TSPEPQREDA) the composition is skewed to basic and acidic residues. 2 positions are modified to phosphoserine: serine 978 and serine 987. Over residues 1021–1034 (AEPWAAAVPPEWVP) the composition is skewed to low complexity. Residues 1024-1054 (WAAAVPPEWVPIIQQDIQSQRKVKPQPPLSD) are required for interaction with GET4. Positions 1026–1068 (AAVPPEWVPIIQQDIQSQRKVKPQPPLSDAYLSGMPAKRRKTM) match the Nuclear localization site motif. The sufficient for the delivery of client proteins to the endoplasmic reticulum stretch occupies residues 1036 to 1146 (IQQDIQSQRK…NAHRAFADDP (111 aa)). Phosphothreonine is present on threonine 1067. The interval 1072-1129 (GPQLLLSEAVSRAAKAAGARPLTSPESLSRDLEAPEVQESYRQQLRSDIQKRLQEDPN) is BAG-similar domain, required and sufficient for interaction with UBL4A. Positions 1080–1090 (AVSRAAKAAGA) are enriched in low complexity. Phosphoserine occurs at positions 1095 and 1131.

Component of the BAG6/BAT3 complex, also named BAT3 complex, at least composed of BAG6, UBL4A and GET4/TRC35. Interacts with GET4; the interaction is direct and localizes BAG6 in the cytosol. Interacts with UBL4A; the interaction is direct and required for UBL4A protein stability. Interacts with AIFM1. Interacts with HSPA2. Interacts with CTCFL. Interacts with p300/EP300. Interacts (via ubiquitin-like domain) with RNF126; required for BAG6-dependent ubiquitination of proteins mislocalized to the cytosol. Interacts (via ubiquitin-like domain) with SGTA; SGTA competes with RNF126 by binding the same region of BAG6, thereby promoting deubiquitination of BAG6-target proteins and rescuing them from degradation. Interacts with ricin A chain. Interacts with VCP and AMFR; both form the VCP/p97-AMFR/gp78 complex. Interacts with SYVN1. Interacts with USP13; the interaction is direct and may mediate UBL4A deubiquitination. Interacts with ZFAND2B. Interacts with KPNA2. Interacts with UBQLN4. In terms of processing, ricin can induce a cleavage by the caspase CASP3. The released C-terminal peptide induces apoptosis.

It is found in the cytoplasm. The protein localises to the cytosol. Its subcellular location is the nucleus. It localises to the secreted. The protein resides in the extracellular exosome. Functionally, ATP-independent molecular chaperone preventing the aggregation of misfolded and hydrophobic patches-containing proteins. Functions as part of a cytosolic protein quality control complex, the BAG6/BAT3 complex, which maintains these client proteins in a soluble state and participates in their proper delivery to the endoplasmic reticulum or alternatively can promote their sorting to the proteasome where they undergo degradation. The BAG6/BAT3 complex is involved in the post-translational delivery of tail-anchored/type II transmembrane proteins to the endoplasmic reticulum membrane. Recruited to ribosomes, it interacts with the transmembrane region of newly synthesized tail-anchored proteins and together with SGTA and ASNA1 mediates their delivery to the endoplasmic reticulum. Client proteins that cannot be properly delivered to the endoplasmic reticulum are ubiquitinated by RNF126, an E3 ubiquitin-protein ligase associated with BAG6 and are sorted to the proteasome. SGTA which prevents the recruitment of RNF126 to BAG6 may negatively regulate the ubiquitination and the proteasomal degradation of client proteins. Similarly, the BAG6/BAT3 complex also functions as a sorting platform for proteins of the secretory pathway that are mislocalized to the cytosol either delivering them to the proteasome for degradation or to the endoplasmic reticulum. The BAG6/BAT3 complex also plays a role in the endoplasmic reticulum-associated degradation (ERAD), a quality control mechanism that eliminates unwanted proteins of the endoplasmic reticulum through their retrotranslocation to the cytosol and their targeting to the proteasome. It maintains these retrotranslocated proteins in an unfolded yet soluble state condition in the cytosol to ensure their proper delivery to the proteasome. BAG6 is also required for selective ubiquitin-mediated degradation of defective nascent chain polypeptides by the proteasome. In this context, it may participate in the production of antigenic peptides and play a role in antigen presentation in immune response. BAG6 is also involved in endoplasmic reticulum stress-induced pre-emptive quality control, a mechanism that selectively attenuates the translocation of newly synthesized proteins into the endoplasmic reticulum and reroutes them to the cytosol for proteasomal degradation. BAG6 may ensure the proper degradation of these proteins and thereby protects the endoplasmic reticulum from protein overload upon stress. By inhibiting the polyubiquitination and subsequent proteasomal degradation of HSPA2 it may also play a role in the assembly of the synaptonemal complex during spermatogenesis. Also positively regulates apoptosis by interacting with and stabilizing the proapoptotic factor AIFM1. By controlling the steady-state expression of the IGF1R receptor, indirectly regulates the insulin-like growth factor receptor signaling pathway. In terms of biological role, involved in DNA damage-induced apoptosis: following DNA damage, accumulates in the nucleus and forms a complex with p300/EP300, enhancing p300/EP300-mediated p53/TP53 acetylation leading to increase p53/TP53 transcriptional activity. When nuclear, may also act as a component of some chromatin regulator complex that regulates histone 3 'Lys-4' dimethylation (H3K4me2). Its function is as follows. Released extracellularly via exosomes, it is a ligand of the natural killer/NK cells receptor NCR3 and stimulates NK cells cytotoxicity. It may thereby trigger NK cells cytotoxicity against neighboring tumor cells and immature myeloid dendritic cells (DC). May mediate ricin-induced apoptosis. This Rattus norvegicus (Rat) protein is Large proline-rich protein BAG6.